The following is a 353-amino-acid chain: Phospho-N-acetylmuramoyl-pentapeptide-transferase (353 aa).

10 helical membrane-spanning segments follow: residues 24-44 (LGFFIAFFLTLFLMPKFILWA), 66-86 (TPTMGGIVFVFATIVASVLCA), 88-108 (LGNLYVLLGIIVLVGFSFVGF), 129-149 (FGMLFVLSLVVSVLLSLKGLD), 160-180 (PLFEMPTMLAVGFWVLVFLST), 192-212 (GLASVPSIFTLLSLSIFVYVA), 229-249 (VGELFVVSLALVGSLFGFLWY), 256-276 (VFMGDSGSLALGGFIAYNAIV), 281-301 (ILLVLMGSIFVVETLSVILQV), and 330-350 (KVIVRFWIISMLSNLVALLSL).

This sequence belongs to the glycosyltransferase 4 family. MraY subfamily. Mg(2+) serves as cofactor.

The protein localises to the cell inner membrane. It catalyses the reaction UDP-N-acetyl-alpha-D-muramoyl-L-alanyl-gamma-D-glutamyl-meso-2,6-diaminopimeloyl-D-alanyl-D-alanine + di-trans,octa-cis-undecaprenyl phosphate = di-trans,octa-cis-undecaprenyl diphospho-N-acetyl-alpha-D-muramoyl-L-alanyl-D-glutamyl-meso-2,6-diaminopimeloyl-D-alanyl-D-alanine + UMP. It participates in cell wall biogenesis; peptidoglycan biosynthesis. Catalyzes the initial step of the lipid cycle reactions in the biosynthesis of the cell wall peptidoglycan: transfers peptidoglycan precursor phospho-MurNAc-pentapeptide from UDP-MurNAc-pentapeptide onto the lipid carrier undecaprenyl phosphate, yielding undecaprenyl-pyrophosphoryl-MurNAc-pentapeptide, known as lipid I. This chain is Phospho-N-acetylmuramoyl-pentapeptide-transferase, found in Helicobacter pylori (strain HPAG1).